The chain runs to 251 residues: Hydroxyacylglutathione hydrolase (251 aa).

Positions 53, 55, 57, 58, 110, 127, and 165 each coordinate Zn(2+).

It belongs to the metallo-beta-lactamase superfamily. Glyoxalase II family. As to quaternary structure, monomer. Zn(2+) serves as cofactor.

It catalyses the reaction an S-(2-hydroxyacyl)glutathione + H2O = a 2-hydroxy carboxylate + glutathione + H(+). The protein operates within secondary metabolite metabolism; methylglyoxal degradation; (R)-lactate from methylglyoxal: step 2/2. Thiolesterase that catalyzes the hydrolysis of S-D-lactoyl-glutathione to form glutathione and D-lactic acid. This Escherichia coli (strain SMS-3-5 / SECEC) protein is Hydroxyacylglutathione hydrolase.